We begin with the raw amino-acid sequence, 177 residues long: 2-C-methyl-D-erythritol 2,4-cyclodiphosphate synthase (177 aa).

A divalent metal cation-binding residues include aspartate 8 and histidine 10. 4-CDP-2-C-methyl-D-erythritol 2-phosphate contacts are provided by residues 8–10 (DVH) and 34–35 (HS). Histidine 42 is a binding site for a divalent metal cation. 4-CDP-2-C-methyl-D-erythritol 2-phosphate-binding positions include 56-58 (DIG), 61-65 (FPDTD), 132-135 (TTEE), phenylalanine 139, and arginine 142.

Belongs to the IspF family. In terms of assembly, homotrimer. A divalent metal cation serves as cofactor.

It catalyses the reaction 4-CDP-2-C-methyl-D-erythritol 2-phosphate = 2-C-methyl-D-erythritol 2,4-cyclic diphosphate + CMP. It participates in isoprenoid biosynthesis; isopentenyl diphosphate biosynthesis via DXP pathway; isopentenyl diphosphate from 1-deoxy-D-xylulose 5-phosphate: step 4/6. In terms of biological role, involved in the biosynthesis of isopentenyl diphosphate (IPP) and dimethylallyl diphosphate (DMAPP), two major building blocks of isoprenoid compounds. Catalyzes the conversion of 4-diphosphocytidyl-2-C-methyl-D-erythritol 2-phosphate (CDP-ME2P) to 2-C-methyl-D-erythritol 2,4-cyclodiphosphate (ME-CPP) with a corresponding release of cytidine 5-monophosphate (CMP). This chain is 2-C-methyl-D-erythritol 2,4-cyclodiphosphate synthase, found in Agathobacter rectalis (strain ATCC 33656 / DSM 3377 / JCM 17463 / KCTC 5835 / VPI 0990) (Eubacterium rectale).